Consider the following 604-residue polypeptide: Arginine--tRNA ligase (604 aa).

Positions 142–152 (PNIAKEMHVGH) match the 'HIGH' region motif.

Belongs to the class-I aminoacyl-tRNA synthetase family. In terms of assembly, monomer.

It localises to the cytoplasm. The catalysed reaction is tRNA(Arg) + L-arginine + ATP = L-arginyl-tRNA(Arg) + AMP + diphosphate. This Prochlorococcus marinus (strain MIT 9312) protein is Arginine--tRNA ligase.